A 75-amino-acid polypeptide reads, in one-letter code: Translational regulator CsrA (75 aa).

It belongs to the CsrA/RsmA family. Homodimer; the beta-strands of each monomer intercalate to form a hydrophobic core, while the alpha-helices form wings that extend away from the core.

Its subcellular location is the cytoplasm. Functionally, a translational regulator that binds mRNA to regulate translation initiation and/or mRNA stability. Usually binds in the 5'-UTR at or near the Shine-Dalgarno sequence preventing ribosome-binding, thus repressing translation. Its main target seems to be the major flagellin gene, while its function is anatagonized by FliW. This is Translational regulator CsrA from Exiguobacterium sp. (strain ATCC BAA-1283 / AT1b).